The sequence spans 350 residues: Quinolinate phosphoribosyltransferase [decarboxylating] 1 (350 aa).

Substrate contacts are provided by residues arginine 141, 172 to 174 (TRK), arginine 196, lysine 206, glutamate 239, aspartate 266, 298 to 300 (SGN), and 319 to 321 (SGA).

Belongs to the NadC/ModD family.

The enzyme catalyses nicotinate beta-D-ribonucleotide + CO2 + diphosphate = quinolinate + 5-phospho-alpha-D-ribose 1-diphosphate + 2 H(+). Its pathway is alkaloid biosynthesis; nicotine biosynthesis. The protein operates within cofactor biosynthesis; NAD(+) biosynthesis; nicotinate D-ribonucleotide from quinolinate: step 1/1. Its function is as follows. Involved in the biosynthesis of pyridine alkaloid natural products, leading mainly to the production of anabasine, anatabine, nicotine and nornicotine, effective deterrents against herbivores with antiparasitic and pesticide properties (neurotoxins); nornicotine serves as the precursor in the synthesis of the carcinogen compound N'-nitrosonornicotine (NNN). Involved in the catabolism of quinolinic acid (QA). The protein is Quinolinate phosphoribosyltransferase [decarboxylating] 1 of Nicotiana glauca (Glaucous tobacco).